The following is a 644-amino-acid chain: Exoribonuclease 2 (644 aa).

The RNB domain occupies 189–516 (REDLTALDFV…NHRLLKAVIK (328 aa)). In terms of domain architecture, S1 motif spans 561 to 643 (DTRFAAEIVD…ETRSIIARPV (83 aa)).

Belongs to the RNR ribonuclease family. RNase II subfamily.

The protein resides in the cytoplasm. The catalysed reaction is Exonucleolytic cleavage in the 3'- to 5'-direction to yield nucleoside 5'-phosphates.. Involved in mRNA degradation. Hydrolyzes single-stranded polyribonucleotides processively in the 3' to 5' direction. This chain is Exoribonuclease 2, found in Escherichia coli (strain SMS-3-5 / SECEC).